The primary structure comprises 276 residues: NADPH-dependent 7-cyano-7-deazaguanine reductase (276 aa).

A substrate-binding site is contributed by 80 to 82 (VES). NADPH is bound at residue 82–83 (SK). Cysteine 183 (thioimide intermediate) is an active-site residue. Aspartate 190 serves as the catalytic Proton donor. 222-223 (HE) lines the substrate pocket. 251–252 (RG) lines the NADPH pocket.

It belongs to the GTP cyclohydrolase I family. QueF type 2 subfamily. Homodimer.

The protein localises to the cytoplasm. The enzyme catalyses 7-aminomethyl-7-carbaguanine + 2 NADP(+) = 7-cyano-7-deazaguanine + 2 NADPH + 3 H(+). It functions in the pathway tRNA modification; tRNA-queuosine biosynthesis. Functionally, catalyzes the NADPH-dependent reduction of 7-cyano-7-deazaguanine (preQ0) to 7-aminomethyl-7-deazaguanine (preQ1). This Burkholderia cenocepacia (strain HI2424) protein is NADPH-dependent 7-cyano-7-deazaguanine reductase.